A 127-amino-acid polypeptide reads, in one-letter code: Ribosome-binding factor A (127 aa).

It belongs to the RbfA family. Monomer. Binds 30S ribosomal subunits, but not 50S ribosomal subunits or 70S ribosomes.

It localises to the cytoplasm. One of several proteins that assist in the late maturation steps of the functional core of the 30S ribosomal subunit. Associates with free 30S ribosomal subunits (but not with 30S subunits that are part of 70S ribosomes or polysomes). Required for efficient processing of 16S rRNA. May interact with the 5'-terminal helix region of 16S rRNA. This is Ribosome-binding factor A from Nitrosococcus oceani (strain ATCC 19707 / BCRC 17464 / JCM 30415 / NCIMB 11848 / C-107).